We begin with the raw amino-acid sequence, 337 residues long: Putative transcription activator protein HfaB (337 aa).

The span at A303–Q313 shows a compositional bias: polar residues. The disordered stretch occupies residues A303–Y337. Over residues T314–Y337 the composition is skewed to basic and acidic residues.

In terms of biological role, required for the attachment of the holdfast to the cell. May be involved in the positive regulation of hfaC. The chain is Putative transcription activator protein HfaB (hfaB) from Caulobacter vibrioides (strain ATCC 19089 / CIP 103742 / CB 15) (Caulobacter crescentus).